A 396-amino-acid polypeptide reads, in one-letter code: Zinc metalloproteinase nas-24 (396 aa).

Positions 1–20 (MTRVVHIIGAAFLLSSYAYC) are cleaved as a signal peptide. Residues 44 to 230 (ERLGSKWLGG…YKINQYYGCG (187 aa)) enclose the Peptidase M12A domain. 2 N-linked (GlcNAc...) asparagine glycosylation sites follow: N63 and N79. 4 disulfides stabilise this stretch: C82/C229, C105/C129, C231/C251, and C253/C262. Zn(2+) is bound at residue H137. Residue E138 is part of the active site. Zn(2+)-binding residues include H141 and H147. An EGF-like domain is found at 224-263 (NQYYGCGCSTQLECKNGGYTSPSDCSRCNCPKGFFGKLCN). N310 carries an N-linked (GlcNAc...) asparagine glycan.

Requires Zn(2+) as cofactor.

It localises to the secreted. Its function is as follows. Metalloprotease. This chain is Zinc metalloproteinase nas-24 (nas-24), found in Caenorhabditis elegans.